Reading from the N-terminus, the 217-residue chain is MOB kinase activator-like 2 (217 aa).

The interval 15–38 (GKESIRGNYKPKKHPRGSSRHTMR) is disordered. A compositionally biased stretch (basic residues) spans 23-38 (YKPKKHPRGSSRHTMR). Cys89, Cys94, His167, and His172 together coordinate Zn(2+).

The protein belongs to the MOB1/phocein family.

This is MOB kinase activator-like 2 (mob2) from Dictyostelium discoideum (Social amoeba).